Reading from the N-terminus, the 224-residue chain is UPF0758 protein CJA_3522 (224 aa).

In terms of domain architecture, MPN spans 102 to 224 (LLSSPHLVRD…LVSLAERGWL (123 aa)). Residues His173, His175, and Asp186 each coordinate Zn(2+). The short motif at 173–186 (HNHPSGLAEPSQAD) is the JAMM motif element.

Belongs to the UPF0758 family.

In Cellvibrio japonicus (strain Ueda107) (Pseudomonas fluorescens subsp. cellulosa), this protein is UPF0758 protein CJA_3522.